We begin with the raw amino-acid sequence, 1015 residues long: Cytosolic carboxypeptidase 1 (1015 aa).

Residues 384–462 (LPTATPSTPG…GALPKTTRLN (79 aa)) are disordered. Residues 416 to 451 (EDGMDEEDEAFVRDDDDEGKDDRGSDDDDGKDDDEI) are compositionally biased toward acidic residues. One can recognise a Peptidase M14 domain in the interval 727-1013 (YPYTYSFLNS…DLLHSFLEMT (287 aa)). The Zn(2+) site is built by H792, E795, and H891. E977 (proton donor/acceptor) is an active-site residue.

It belongs to the peptidase M14 family. Requires Zn(2+) as cofactor. In terms of tissue distribution, in hermaphrodites and males, expressed in amphid and IL2 ciliated sensory neurons. In males, expressed in CEM head neurons, RnB and HOB tail neurons, and in gubernacular erector and retractor muscles.

Its subcellular location is the perikaryon. The protein resides in the cell projection. The protein localises to the cilium. It localises to the dendrite. Catalyzes the deglutamylation of polyglutamate side chains generated by post-translational polyglutamylation of proteins such as tubulins. Via the deglutamylation of tubulin, regulates the localization and velocity of kinesin motors and the structural integrity of microtubules in sensory cilia. In male CEM sensory neurons, regulates the cilia release of bioactive extracellular vesicles. Also regulates microtubule dynamics in uterine muscle cells. The polypeptide is Cytosolic carboxypeptidase 1 (Caenorhabditis elegans).